The chain runs to 345 residues: S-adenosylmethionine:tRNA ribosyltransferase-isomerase (345 aa).

The protein belongs to the QueA family. Monomer.

The protein resides in the cytoplasm. The enzyme catalyses 7-aminomethyl-7-carbaguanosine(34) in tRNA + S-adenosyl-L-methionine = epoxyqueuosine(34) in tRNA + adenine + L-methionine + 2 H(+). It participates in tRNA modification; tRNA-queuosine biosynthesis. Transfers and isomerizes the ribose moiety from AdoMet to the 7-aminomethyl group of 7-deazaguanine (preQ1-tRNA) to give epoxyqueuosine (oQ-tRNA). The sequence is that of S-adenosylmethionine:tRNA ribosyltransferase-isomerase from Shewanella sp. (strain MR-7).